The primary structure comprises 594 residues: Keratin, type II cytoskeletal 2 oral (594 aa).

The segment at 1 to 164 (MSRQACKKSF…DPQIGQVKAQ (164 aa)) is head. Omega-N-methylarginine occurs at positions 85 and 104. A coil 1A region spans residues 165–200 (EREQIKTLNNKFASFIDKVRFLEQQNKVLETKWELL). An IF rod domain is found at 165-480 (EREQIKTLNN…KLLEGEECRL (316 aa)). The interval 201–221 (QQQTIRSGSGPQNLEPFFESY) is linker 1. The segment at 222-313 (ISCLRKQLDS…TLYDMELSQI (92 aa)) is coil 1B. Positions 314-337 (QSHVSDTSVVLSMDNNRCLDLDSI) are linker 12. The coil 2 stretch occupies residues 338–476 (IAEVKAQYED…ATYRKLLEGE (139 aa)). Residues 477–594 (ECRLSGEFQN…TTSSSQQRSK (118 aa)) form a tail region. The interval 497 to 594 (TSTSSSGSFR…TTSSSQQRSK (98 aa)) is disordered. Gly residues predominate over residues 506–522 (RGTGGSNYGGDSSGRSG). Low complexity predominate over residues 523-551 (GSSSSSSRGSSSRGSSGSRLGSGGSISVS). Position 541 is an omega-N-methylarginine (Arg541). Positions 552–564 (QQRMGFNSGGSQT) are enriched in polar residues. Residues 565-594 (SVGSSYKSGRGGSSSVQFSQTTSSSQQRSK) show a composition bias toward low complexity.

The protein belongs to the intermediate filament family. Heterotetramer of two type I and two type II keratins.

Functionally, probably contributes to terminal cornification. The chain is Keratin, type II cytoskeletal 2 oral from Mus musculus (Mouse).